The chain runs to 96 residues: Protein Vpr (96 aa).

The tract at residues Met1–Leu42 is homooligomerization. A Phosphoserine; by host modification is found at Ser79.

The protein belongs to the HIV-1 VPR protein family. In terms of assembly, homooligomer, may form homodimer. Interacts with p6-gag region of the Pr55 Gag precursor protein through a (Leu-X-X)4 motif near the C-terminus of the P6gag protein. Interacts with host UNG. May interact with host RAD23A/HHR23A. Interacts with host VPRBP/DCAF1, leading to hijack the CUL4A-RBX1-DDB1-DCAF1/VPRBP complex, mediating ubiquitination of host proteins such as TERT and ZGPAT and arrest of the cell cycle in G2 phase. Phosphorylated on several residues by host. These phosphorylations regulate VPR activity for the nuclear import of the HIV-1 pre-integration complex.

It is found in the virion. The protein resides in the host nucleus. It localises to the host extracellular space. Its function is as follows. During virus replication, may deplete host UNG protein, and incude G2-M cell cycle arrest. Acts by targeting specific host proteins for degradation by the 26S proteasome, through association with the cellular CUL4A-DDB1 E3 ligase complex by direct interaction with host VPRPB/DCAF-1. Cell cycle arrest reportedly occurs within hours of infection and is not blocked by antiviral agents, suggesting that it is initiated by the VPR carried into the virion. Additionally, VPR induces apoptosis in a cell cycle dependent manner suggesting that these two effects are mechanistically linked. Detected in the serum and cerebrospinal fluid of AIDS patient, VPR may also induce cell death to bystander cells. During virus entry, plays a role in the transport of the viral pre-integration (PIC) complex to the host nucleus. This function is crucial for viral infection of non-dividing macrophages. May act directly at the nuclear pore complex, by binding nucleoporins phenylalanine-glycine (FG)-repeat regions. This chain is Protein Vpr, found in Human immunodeficiency virus type 1 group M subtype G (isolate 92NG083) (HIV-1).